Reading from the N-terminus, the 534-residue chain is Calcium uptake protein 1 homolog, mitochondrial (534 aa).

Residues 1–32 constitute a mitochondrion transit peptide; that stretch reads MLHCSFLRVIPIKNASKRLIIVRSLTSAPAKT. The tract at residues 131–150 is disordered; that stretch reads PEASQKEEVTESNGEVEEVK. 3 consecutive EF-hand domains span residues 271-306, 338-359, and 466-501; these read TSHA…IMSQ, KDGK…LQHD, and LSDH…RMRR. Ca(2+) contacts are provided by D284, D286, N288, and E295.

This sequence belongs to the MICU1 family. MICU1 subfamily. Expressed at low levels in PLM touch receptor neurons, germ cells, epidermis, and muscles.

Its subcellular location is the mitochondrion intermembrane space. It is found in the mitochondrion inner membrane. Calcium sensor of the mitochondrial calcium uniporter (mcu-1) channel, which senses calcium level via its EF-hand domains. At low calcium levels, micu-1 occludes the pore of the mcu-1 channel, preventing mitochondrial calcium uptake. At higher calcium levels, calcium-binding to micu-1 induces a conformational change that weakens mcu-1-micu-1 interactions and moves micu-1 away from the pore, allowing calcium permeation through the mcu-1 channel. Also required to protect against manganese toxicity by preventing manganese uptake by mcu-1. Modulates the activity of the mitochondrial calcium uniporter protein mcu-1 depending on the level of intracellular calcium in PLM touch receptor neurons following axonal injury. In Caenorhabditis elegans, this protein is Calcium uptake protein 1 homolog, mitochondrial.